Here is a 335-residue protein sequence, read N- to C-terminus: Pregnancy-specific beta-1-glycoprotein 11 (335 aa).

An N-terminal signal peptide occupies residues 1–34; the sequence is MGPLSAPPCTEHIKWKGLLLTALLLNFWNLPTTA. Residues 35-144 form the Ig-like V-type domain; sequence QVMIEAQPPK…TGYFTFTLYL (110 aa). Residues asparagine 61, asparagine 104, and asparagine 111 are each glycosylated (N-linked (GlcNAc...) asparagine). The Cell attachment site motif lies at 127–129; it reads RGD. 2 Ig-like C2-type domains span residues 147–234 and 242–317; these read PKPS…VTLN and PRIF…TSLT. Intrachain disulfides connect cysteine 169–cysteine 217 and cysteine 261–cysteine 301.

It belongs to the immunoglobulin superfamily. CEA family.

Its subcellular location is the secreted. The sequence is that of Pregnancy-specific beta-1-glycoprotein 11 (PSG11) from Homo sapiens (Human).